Here is a 373-residue protein sequence, read N- to C-terminus: Transcription factor NF-E2 45 kDa subunit (373 aa).

Residues 1–83 (MSPCPPQQSR…SGFPLPPPPY (83 aa)) form a required for interaction with MAPK8 region. The transactivation domain stretch occupies residues 1–206 (MSPCPPQQSR…PAAETPLALE (206 aa)). 2 consecutive short sequence motifs (PXY motif) follow at residues 61-65 (PPTTY) and 79-83 (PPPPY). The interval 127–150 (LDIGLPAGPPKPQEDPESDSGLSL) is disordered. Phosphoserine; by MAPK8 is present on Ser-157. Ser-170 is modified (phosphoserine; by PKA). The disordered stretch occupies residues 205-226 (LEPSSGPVRAKPTARGEAGSRD). The region spanning 266–329 (LVRDIRRRGK…EVMRQQLTEL (64 aa)) is the bZIP domain. The segment at 268–287 (RDIRRRGKNKVAAQNCRKRK) is basic motif. The leucine-zipper stretch occupies residues 291–298 (IVQLEREL). Residue Lys-368 forms a Glycyl lysine isopeptide (Lys-Gly) (interchain with G-Cter in SUMO1) linkage.

Belongs to the bZIP family. CNC subfamily. In terms of assembly, homodimer; can bind DNA as a homodimer. Erythroid transcription activator nuclear factor erythroid-derived 2 (NF-E2), composed of a heterodimer of NFE2 and MAFK, possesses transactivation activity on beta-globin. Also forms high affinity heterodimer with MAFG; the interaction promotes erythropoiesis. Interacts (via the PXY motif 1) with ITCH (via the WW 1 domain); the interaction promotes 'Lys63'-linked ubiquitination of NFE2, translocates it to the cytoplasm and inhibits its transactivation activity. Interacts with KMT2D/MLL2; the interaction promotes transactivation of the beta-globin locus. Interacts with MAPK8 (phosphorylated form); the interaction leads to phosphorylation of NFE2 in undifferentiated cells. Phosphorylated on serine residues. In undifferentiated erythrocytes, phosphorylated by MAPK8 which then leads to ubiquitination and protein degradation. In terms of processing, sumoylated. Sumoylation is required for translocation to nuclear bodies PODs, anchoring to the gene loci, and transactivation of the beta-globin gene. Post-translationally, ubiquitinated mainly by 'Lys63'-linked ubiquitin. Polyubiquitination with 'Lys63'-linked ubiquitin by ITCH retains NFE2 in the cytoplasm preventing its transactivation activity. In undifferentiated erythrocyte, ubiquitinated after MAPK8-mediatd phosphorylation leading to protein degradation. Expressed in hematopoietic cells and also in colon and testis.

The protein resides in the nucleus. It localises to the PML body. It is found in the cytoplasm. Component of the NF-E2 complex essential for regulating erythroid and megakaryocytic maturation and differentiation. Binds to the hypersensitive site 2 (HS2) of the beta-globin control region (LCR). This subunit (NFE2) recognizes the TCAT/C sequence of the AP-1-like core palindrome present in a number of erythroid and megakaryocytic gene promoters. Requires MAFK or other small MAF proteins for binding to the NF-E2 motif. May play a role in all aspects of hemoglobin production from globin and heme synthesis to procurement of iron. This chain is Transcription factor NF-E2 45 kDa subunit (NFE2), found in Homo sapiens (Human).